The sequence spans 165 residues: UPF0254 protein MmarC6_1720 (165 aa).

It belongs to the UPF0254 family.

This is UPF0254 protein MmarC6_1720 from Methanococcus maripaludis (strain C6 / ATCC BAA-1332).